The following is a 453-amino-acid chain: Protein IVY1 (453 aa).

Over residues 1-16 the composition is skewed to polar residues; sequence MPDNNTEQLQGSPSSD. The disordered stretch occupies residues 1–20; the sequence is MPDNNTEQLQGSPSSDQRLR. Phosphoserine is present on residues Ser59, Ser84, and Ser85. Coiled coils occupy residues 102–122 and 230–257; these read KRDV…SNAY and IRNL…KHDF. Disordered regions lie at residues 316-340 and 353-453; these read DGPY…EETG and TSQP…SSNI. Residue Ser335 is modified to Phosphoserine. Positions 353–371 are enriched in low complexity; that stretch reads TSQPSTSKTSLPKSKGSST. Polar residues-rich tracts occupy residues 372–384 and 404–429; these read VSTP…SSNK and LMGT…TFKQ. Basic and acidic residues predominate over residues 431 to 442; sequence SIKEDNDNHSSD. Residues 443–453 show a composition bias toward polar residues; sequence TDGMQDQSSNI.

In terms of assembly, homomultimer. Interacts with YPT7 and VPS33.

The protein localises to the vacuole membrane. In terms of biological role, may be required for vacuolar fusion. Overexpression leads to fragmentation of vacuoles, missorting of the vacuolar enzyme carboxypeptidase Y (CPY) to the exterior of the cell and accumulation of multivesicular bodies inside the cell. In Saccharomyces cerevisiae (strain ATCC 204508 / S288c) (Baker's yeast), this protein is Protein IVY1 (IVY1).